The primary structure comprises 405 residues: Terminal uridylyltransferase cid1 (405 aa).

Residue Ser90 coordinates UTP. Residues Asp101 and Asp103 each coordinate Mg(2+). The UTP site is built by Ala168, Asn171, Thr172, Lys193, Lys197, Ser211, Tyr212, and His336. The region spanning 267–336 is the PAP-associated domain; that stretch reads SLGSLLHGFF…AIEDPFEISH (70 aa). Arg340 is an ATP binding site. The interval 377–405 is disordered; that stretch reads APIPPRRQKKTDEQSNKKLLNETDGDNSE. The span at 386 to 397 shows a compositional bias: basic and acidic residues; sequence KTDEQSNKKLLN.

It belongs to the DNA polymerase type-B-like family. It depends on Mg(2+) as a cofactor. Mn(2+) is required as a cofactor.

The protein localises to the cytoplasm. The enzyme catalyses RNA(n) + UTP = RNA(n)-3'-uridine ribonucleotide + diphosphate. The catalysed reaction is RNA(n) + ATP = RNA(n)-3'-adenine ribonucleotide + diphosphate. Functionally, cytoplasmic uridylyltransferase that mediates the terminal uridylation of mRNAs with short poly(A) tails such as such as act1, hcn1 and urg1 mRNAs, hence facilitating global mRNA decay. Uridylates the 3' ends of actin mRNAs upon S-phase arrest. Also has a weak poly(A) polymerase (PAP) activity. Residue His-336 is responsible for the specificity for UTP. Involved in cell cycle arrest where in association with crb2/rhp9 and chk1 it inhibits unscheduled mitosis. This Schizosaccharomyces pombe (strain 972 / ATCC 24843) (Fission yeast) protein is Terminal uridylyltransferase cid1.